A 109-amino-acid chain; its full sequence is Mitochondrial pyruvate carrier 1 (109 aa).

Ala-2 carries the post-translational modification N-acetylalanine. Topologically, residues 2-20 are mitochondrial matrix; that stretch reads AGALVRKAADYVRSKDFRD. A helical transmembrane segment spans residues 21-41; the sequence is YLMSTHFWGPVANWGLPIAAI. The Mitochondrial intermembrane segment spans residues 42-52; sequence NDMKKSPEIIS. Residues 53-71 traverse the membrane as a helical segment; the sequence is GRMTFALCCYSLTFMRFAY. Lys-72 carries the post-translational modification N6-acetyllysine. The Mitochondrial matrix segment spans residues 72–109; the sequence is KVQPRNWLLFACHVTNEVAQLIQGGRLINYEMSKRPSA.

This sequence belongs to the mitochondrial pyruvate carrier (MPC) (TC 2.A.105) family. As to quaternary structure, homodimer. Forms heterodimer with MPC2. The heterodimer is the more stable and dominant form.

It localises to the mitochondrion inner membrane. The catalysed reaction is pyruvate(out) + H(+)(out) = pyruvate(in) + H(+)(in). Functionally, mediates the uptake of pyruvate into mitochondria. This Mus musculus (Mouse) protein is Mitochondrial pyruvate carrier 1 (Mpc1).